The primary structure comprises 445 residues: 3-phosphoshikimate 1-carboxyvinyltransferase (445 aa).

Residues 1-25 (MTDSNQPMPLQARKSGALHGTARVP) form a disordered region. The 3-phosphoshikimate site is built by Lys28, Ser29, and Arg33. Lys28 contributes to the phosphoenolpyruvate binding site. Phosphoenolpyruvate contacts are provided by Gly101 and Arg129. Residues Ser175, Gln177, Asp328, and Lys355 each contribute to the 3-phosphoshikimate site. Residue Gln177 participates in phosphoenolpyruvate binding. Catalysis depends on Asp328, which acts as the Proton acceptor. Phosphoenolpyruvate contacts are provided by Arg359 and Arg402.

Belongs to the EPSP synthase family. Monomer.

Its subcellular location is the cytoplasm. The catalysed reaction is 3-phosphoshikimate + phosphoenolpyruvate = 5-O-(1-carboxyvinyl)-3-phosphoshikimate + phosphate. It functions in the pathway metabolic intermediate biosynthesis; chorismate biosynthesis; chorismate from D-erythrose 4-phosphate and phosphoenolpyruvate: step 6/7. Its function is as follows. Catalyzes the transfer of the enolpyruvyl moiety of phosphoenolpyruvate (PEP) to the 5-hydroxyl of shikimate-3-phosphate (S3P) to produce enolpyruvyl shikimate-3-phosphate and inorganic phosphate. In Rhodopseudomonas palustris (strain ATCC BAA-98 / CGA009), this protein is 3-phosphoshikimate 1-carboxyvinyltransferase.